A 337-amino-acid polypeptide reads, in one-letter code: Vegetative-specific protein H5 (337 aa).

The Involved in the stabilization of the negatively charged intermediate by the formation of the oxyanion hole signature appears at 88–90 (HGG). Catalysis depends on residues Ser-161, Asp-261, and His-291.

Belongs to the 'GDXG' lipolytic enzyme family.

The polypeptide is Vegetative-specific protein H5 (cinB) (Dictyostelium discoideum (Social amoeba)).